A 370-amino-acid polypeptide reads, in one-letter code: Biotin synthase (370 aa).

The 228-residue stretch at Asn56–Arg283 folds into the Radical SAM core domain. Residues Cys71, Cys75, and Cys78 each contribute to the [4Fe-4S] cluster site. [2Fe-2S] cluster contacts are provided by Cys115, Cys146, Cys206, and Arg278. Basic and acidic residues predominate over residues Gly327–Asp344. The segment at Gly327 to Gln346 is disordered.

This sequence belongs to the radical SAM superfamily. Biotin synthase family. As to quaternary structure, homodimer. [4Fe-4S] cluster serves as cofactor. [2Fe-2S] cluster is required as a cofactor.

It catalyses the reaction (4R,5S)-dethiobiotin + (sulfur carrier)-SH + 2 reduced [2Fe-2S]-[ferredoxin] + 2 S-adenosyl-L-methionine = (sulfur carrier)-H + biotin + 2 5'-deoxyadenosine + 2 L-methionine + 2 oxidized [2Fe-2S]-[ferredoxin]. Its pathway is cofactor biosynthesis; biotin biosynthesis; biotin from 7,8-diaminononanoate: step 2/2. Functionally, catalyzes the conversion of dethiobiotin (DTB) to biotin by the insertion of a sulfur atom into dethiobiotin via a radical-based mechanism. This Chromohalobacter salexigens (strain ATCC BAA-138 / DSM 3043 / CIP 106854 / NCIMB 13768 / 1H11) protein is Biotin synthase.